Reading from the N-terminus, the 219-residue chain is Thymidylate kinase (219 aa).

7 to 14 (GIDGAGKS) contributes to the ATP binding site.

The protein belongs to the thymidylate kinase family.

It carries out the reaction dTMP + ATP = dTDP + ADP. Its function is as follows. Phosphorylation of dTMP to form dTDP in both de novo and salvage pathways of dTTP synthesis. The chain is Thymidylate kinase from Chlorobium limicola (strain DSM 245 / NBRC 103803 / 6330).